Here is a 268-residue protein sequence, read N- to C-terminus: Eukaryotic translation initiation factor 3 subunit G-2 (268 aa).

In terms of domain architecture, RRM spans 187 to 265 (SAVRISNLSE…LILCVEWSKP (79 aa)).

The protein belongs to the eIF-3 subunit G family. As to quaternary structure, component of the eukaryotic translation initiation factor 3 (eIF-3) complex. The eIF-3 complex interacts with pix.

The protein resides in the cytoplasm. Its function is as follows. RNA-binding component of the eukaryotic translation initiation factor 3 (eIF-3) complex, which is involved in protein synthesis of a specialized repertoire of mRNAs and, together with other initiation factors, stimulates binding of mRNA and methionyl-tRNAi to the 40S ribosome. The eIF-3 complex specifically targets and initiates translation of a subset of mRNAs involved in cell proliferation. This subunit can bind 18S rRNA. This chain is Eukaryotic translation initiation factor 3 subunit G-2, found in Drosophila willistoni (Fruit fly).